A 215-amino-acid chain; its full sequence is Probable phosphoglycerate mutase GpmB (215 aa).

Substrate is bound by residues 8-15, 21-22, Arg-58, Arg-60, 82-85, and 151-152; these read RHGESEWN, QG, ELHM, and GI. The Tele-phosphohistidine intermediate role is filled by His-9. Residue Glu-82 is the Proton donor/acceptor of the active site.

This sequence belongs to the phosphoglycerate mutase family. GpmB subfamily.

It carries out the reaction (2R)-2-phosphoglycerate = (2R)-3-phosphoglycerate. It participates in carbohydrate degradation; glycolysis; pyruvate from D-glyceraldehyde 3-phosphate: step 3/5. The chain is Probable phosphoglycerate mutase GpmB from Photorhabdus laumondii subsp. laumondii (strain DSM 15139 / CIP 105565 / TT01) (Photorhabdus luminescens subsp. laumondii).